The chain runs to 234 residues: uncharacterized protein (234 aa).

6 helical membrane-spanning segments follow: residues 5–23, 38–60, 73–92, 127–149, 170–192, and 197–217; these read LFYI…LWSF, IPTA…GFWV, AHIQ…AHGW, AITL…YIWL, GVAI…TVIS, and TQAG…ALAF.

The protein localises to the cell membrane. This is an uncharacterized protein from Archaeoglobus fulgidus (strain ATCC 49558 / DSM 4304 / JCM 9628 / NBRC 100126 / VC-16).